The chain runs to 170 residues: MNLPLLATEGFGLNLNLFETNVLNWAVVVFGLYKFLPSFLGKMLQKRREGILLELKDAEDRLLKATQALEKAKTDLSLAEEKASQIKADSLKRSESIRMESEKKAIEEMARIKQSAISDESSEASRAISQLRKEAVELAIKKALDSLPNRLDQTTQENLVTQSINNIEMN.

A helical membrane pass occupies residues 15–37 (LNLFETNVLNWAVVVFGLYKFLP).

The protein belongs to the ATPase B chain family. As to quaternary structure, F-type ATPases have 2 components, F(1) - the catalytic core - and F(0) - the membrane proton channel. F(1) has five subunits: alpha(3), beta(3), gamma(1), delta(1), epsilon(1). F(0) has four main subunits: a(1), b(1), b'(1) and c(10-14). The alpha and beta chains form an alternating ring which encloses part of the gamma chain. F(1) is attached to F(0) by a central stalk formed by the gamma and epsilon chains, while a peripheral stalk is formed by the delta, b and b' chains.

The protein resides in the cellular thylakoid membrane. In terms of biological role, f(1)F(0) ATP synthase produces ATP from ADP in the presence of a proton or sodium gradient. F-type ATPases consist of two structural domains, F(1) containing the extramembraneous catalytic core and F(0) containing the membrane proton channel, linked together by a central stalk and a peripheral stalk. During catalysis, ATP synthesis in the catalytic domain of F(1) is coupled via a rotary mechanism of the central stalk subunits to proton translocation. Functionally, component of the F(0) channel, it forms part of the peripheral stalk, linking F(1) to F(0). The chain is ATP synthase subunit b from Prochlorococcus marinus (strain MIT 9515).